A 369-amino-acid chain; its full sequence is MRN complex-interacting protein (369 aa).

Phosphoserine is present on Ser-115. Disordered regions lie at residues 122–150 (GGGV…PRKR), 209–245 (PSFT…PCPA), and 282–317 (AQAE…TPMP). The Nuclear localization signal (NLS) signature appears at 148 to 151 (RKRK). A compositionally biased stretch (basic and acidic residues) spans 221–230 (KGRESSREDL). Positions 223 to 259 (RESSREDLDTMELVPRGEPPCPAQQVRTMSKWEQCLG) are necessary for the association with the MRN complex.

The protein belongs to the MRNIP family. In terms of assembly, associates with the MRE11-RAD50-NBN (MRN) damage-sensing complex; this association is constitutive. Interacts with MRE11. Interacts with NBN. Interacts with RAD50. In terms of processing, phosphorylated; phosphorylation is constitutive and occurs in the absence of any DNA-damaging stimulus. Phosphorylation on Ser-115 is necessary for its nuclear retention.

The protein localises to the nucleus. Its subcellular location is the nucleoplasm. Its function is as follows. Plays a role in the cellular response to DNA damage and the maintenance of genome stability through its association with the MRN damage-sensing complex. Promotes chromatin loading and activity of the MRN complex to facilitate subsequent ATM-mediated DNA damage response signaling and DNA repair. The chain is MRN complex-interacting protein from Bos taurus (Bovine).